The primary structure comprises 652 residues: Acetyl-coenzyme A synthetase (652 aa).

CoA-binding positions include 190-193 and T310; that span reads RGGR. Residues 386-388, 410-415, D499, and R514 each bind ATP; these read GEP and DTWWQT. Residue S522 participates in CoA binding. Position 525 (R525) interacts with ATP. The Mg(2+) site is built by V536, H538, and V541. R583 lines the CoA pocket. Position 608 is an N6-acetyllysine (K608).

This sequence belongs to the ATP-dependent AMP-binding enzyme family. The cofactor is Mg(2+). Acetylated. Deacetylation by the SIR2-homolog deacetylase activates the enzyme.

It catalyses the reaction acetate + ATP + CoA = acetyl-CoA + AMP + diphosphate. Its function is as follows. Catalyzes the conversion of acetate into acetyl-CoA (AcCoA), an essential intermediate at the junction of anabolic and catabolic pathways. AcsA undergoes a two-step reaction. In the first half reaction, AcsA combines acetate with ATP to form acetyl-adenylate (AcAMP) intermediate. In the second half reaction, it can then transfer the acetyl group from AcAMP to the sulfhydryl group of CoA, forming the product AcCoA. This Methylorubrum extorquens (strain CM4 / NCIMB 13688) (Methylobacterium extorquens) protein is Acetyl-coenzyme A synthetase.